Here is a 355-residue protein sequence, read N- to C-terminus: MTIQIFGTVCIDKVRKIEEFPKSLGTYTPVISEQILLGGEASNTFVCINEWVEKGQESIKLIVPPLVDDLNGKFIINKLNQSTGKTSDKNVIFTQIQEINNNNENNYLKYTPITDIYVCNKKERTMFGIGFPEIDQYMVQCKEIKEKILNVDLQFGPNHWISLDANYPLINREVIKKSIITNTNLYIMDQELDTVVDELSLENTSIEHTSNLIFQSSSDHFGNKDGPIKEFFNIMNQWFQKDNGIFKKFLFILTDSKNGFGIGGTWNNEWIEPYWFTPSAIPSDKVVDTTGAGDSFRAGLIFSLVHKNQSLSDSLEFASACGALNCLSIGGCSSTPTLNSINQFLKLNNKNQMFL.

Belongs to the carbohydrate kinase PfkB family.

This is an uncharacterized protein from Dictyostelium discoideum (Social amoeba).